The chain runs to 364 residues: Peptide chain release factor 1 (364 aa).

An N5-methylglutamine modification is found at Gln238. Positions 286 to 297 (DEKRQAEEDSTR) are enriched in basic and acidic residues. The tract at residues 286–315 (DEKRQAEEDSTRRNLVGSGDRSERIRTYNY) is disordered.

The protein belongs to the prokaryotic/mitochondrial release factor family. Methylated by PrmC. Methylation increases the termination efficiency of RF1.

It localises to the cytoplasm. Peptide chain release factor 1 directs the termination of translation in response to the peptide chain termination codons UAG and UAA. This chain is Peptide chain release factor 1, found in Idiomarina loihiensis (strain ATCC BAA-735 / DSM 15497 / L2-TR).